The chain runs to 90 residues: MMADFIKYPVTTEKSYLSMFKNKQYTFDVDLRLTKPQIKKLFETLFGVNVIGINTHRPPRKKVRAGLSTGYRPAYKRVILTLKEGQSIQF.

It belongs to the universal ribosomal protein uL23 family. In terms of assembly, part of the 50S ribosomal subunit.

The protein resides in the plastid. Its subcellular location is the chloroplast. Binds to 23S rRNA. The polypeptide is Large ribosomal subunit protein uL23c (rpl23) (Tetradesmus obliquus (Green alga)).